A 72-amino-acid chain; its full sequence is Translation initiation factor IF-1 (72 aa).

One can recognise an S1-like domain in the interval 1–72 (MAKEDVIEIE…TRGRITYRFK (72 aa)).

The protein belongs to the IF-1 family. In terms of assembly, component of the 30S ribosomal translation pre-initiation complex which assembles on the 30S ribosome in the order IF-2 and IF-3, IF-1 and N-formylmethionyl-tRNA(fMet); mRNA recruitment can occur at any time during PIC assembly.

It localises to the cytoplasm. One of the essential components for the initiation of protein synthesis. Stabilizes the binding of IF-2 and IF-3 on the 30S subunit to which N-formylmethionyl-tRNA(fMet) subsequently binds. Helps modulate mRNA selection, yielding the 30S pre-initiation complex (PIC). Upon addition of the 50S ribosomal subunit IF-1, IF-2 and IF-3 are released leaving the mature 70S translation initiation complex. This Streptococcus agalactiae serotype Ia (strain ATCC 27591 / A909 / CDC SS700) protein is Translation initiation factor IF-1.